We begin with the raw amino-acid sequence, 335 residues long: Nucleoid-associated protein PP_0973 (335 aa).

Belongs to the YejK family.

It localises to the cytoplasm. Its subcellular location is the nucleoid. The chain is Nucleoid-associated protein PP_0973 from Pseudomonas putida (strain ATCC 47054 / DSM 6125 / CFBP 8728 / NCIMB 11950 / KT2440).